The chain runs to 230 residues: 7-cyano-7-deazaguanine synthase (230 aa).

14–24 (LSGGLDSTTTL) lines the ATP pocket. Zn(2+) contacts are provided by Cys-194, Cys-204, Cys-207, and Cys-210.

The protein belongs to the QueC family. Zn(2+) is required as a cofactor.

It catalyses the reaction 7-carboxy-7-deazaguanine + NH4(+) + ATP = 7-cyano-7-deazaguanine + ADP + phosphate + H2O + H(+). The protein operates within purine metabolism; 7-cyano-7-deazaguanine biosynthesis. In terms of biological role, catalyzes the ATP-dependent conversion of 7-carboxy-7-deazaguanine (CDG) to 7-cyano-7-deazaguanine (preQ(0)). In Ruthia magnifica subsp. Calyptogena magnifica, this protein is 7-cyano-7-deazaguanine synthase.